The sequence spans 243 residues: Probable intron-encoded endonuclease aI3 (243 aa).

The protein belongs to the LAGLIDADG endonuclease family.

It is found in the mitochondrion. Mitochondrial DNA endonuclease involved in intron homing. In Dictyostelium citrinum (Slime mold), this protein is Probable intron-encoded endonuclease aI3 (aI3).